A 243-amino-acid chain; its full sequence is 1-(5-phosphoribosyl)-5-[(5-phosphoribosylamino)methylideneamino] imidazole-4-carboxamide isomerase (243 aa).

Residue D8 is the Proton acceptor of the active site. D130 serves as the catalytic Proton donor.

It belongs to the HisA/HisF family.

Its subcellular location is the cytoplasm. It carries out the reaction 1-(5-phospho-beta-D-ribosyl)-5-[(5-phospho-beta-D-ribosylamino)methylideneamino]imidazole-4-carboxamide = 5-[(5-phospho-1-deoxy-D-ribulos-1-ylimino)methylamino]-1-(5-phospho-beta-D-ribosyl)imidazole-4-carboxamide. The protein operates within amino-acid biosynthesis; L-histidine biosynthesis; L-histidine from 5-phospho-alpha-D-ribose 1-diphosphate: step 4/9. The protein is 1-(5-phosphoribosyl)-5-[(5-phosphoribosylamino)methylideneamino] imidazole-4-carboxamide isomerase of Acinetobacter baumannii (strain SDF).